We begin with the raw amino-acid sequence, 435 residues long: Serine carboxypeptidase-like 12 (435 aa).

Positions 1–21 (MKSTPKLLLLLLFIINHHVDS) are cleaved as a signal peptide. Disulfide bonds link Cys80/Cys323, Cys244/Cys258, and Cys282/Cys289. An N-linked (GlcNAc...) asparagine glycan is attached at Asn101. Ser176 is a catalytic residue. Asn313, Asn336, and Asn344 each carry an N-linked (GlcNAc...) asparagine glycan. Asp360 is an active-site residue. N-linked (GlcNAc...) asparagine glycosylation is present at Asn376. His413 is an active-site residue. N-linked (GlcNAc...) asparagine glycosylation occurs at Asn420.

Belongs to the peptidase S10 family. In terms of tissue distribution, expressed in roots.

It is found in the secreted. Probable carboxypeptidase. In Arabidopsis thaliana (Mouse-ear cress), this protein is Serine carboxypeptidase-like 12 (SCPL12).